A 926-amino-acid polypeptide reads, in one-letter code: Storkhead-box protein 2 (926 aa).

Disordered stretches follow at residues 1–32, 338–391, 452–529, 564–588, 632–672, 724–803, and 825–926; these read MKKT…RSEK, EEEK…HLDI, EMPF…SYID, KEPS…YGEL, GVKK…GGVA, LKSH…GTMQ, and LAPK…VTSV. Residues 18-32 are compositionally biased toward basic and acidic residues; the sequence is FSDRASDRMRSRSEK. The span at 353-378 shows a compositional bias: basic residues; it reads HSGRSKKSRTHRKSHGKSRSHSKTRV. The segment covering 379–391 has biased composition (basic and acidic residues); it reads SKGDPSDGSHLDI. Basic residues predominate over residues 463–472; sequence SHSKVHRSHS. Positions 473 to 495 are enriched in basic and acidic residues; that stretch reads HTQDRRSRNERSNKAKERSRSMD. Residues 518–529 show a composition bias toward polar residues; the sequence is QDDQTPSQSYID. The segment covering 632 to 658 has biased composition (basic and acidic residues); sequence GVKKLSPSDRQVPHSSREPVGHKEESP. The span at 746–769 shows a compositional bias: polar residues; that stretch reads LGTSAAQAMPASQRQQESGGNQEA. Positions 785–799 are enriched in basic and acidic residues; the sequence is GANKNTEEEKNREDV. 2 stretches are compositionally biased toward polar residues: residues 847 to 884 and 914 to 926; these read MDSS…QNPA and KPSN…VTSV.

The sequence is that of Storkhead-box protein 2 (STOX2) from Homo sapiens (Human).